Reading from the N-terminus, the 562-residue chain is Formate--tetrahydrofolate ligase (562 aa).

Residue 71 to 78 (TPAGEGKS) participates in ATP binding.

The protein belongs to the formate--tetrahydrofolate ligase family.

The enzyme catalyses (6S)-5,6,7,8-tetrahydrofolate + formate + ATP = (6R)-10-formyltetrahydrofolate + ADP + phosphate. Its pathway is one-carbon metabolism; tetrahydrofolate interconversion. This Bacillus thuringiensis (strain Al Hakam) protein is Formate--tetrahydrofolate ligase.